Here is a 369-residue protein sequence, read N- to C-terminus: Protein-glutamate methylesterase/protein-glutamine glutaminase of group 3 operon (369 aa).

In terms of domain architecture, Response regulatory spans 11-128; sequence RVLIVDDSAA…DLERQEASIR (118 aa). Asp62 bears the 4-aspartylphosphate mark. Positions 136-168 are disordered; sequence ATETTRRRSQPEPRPLAPGPKLTADEILPARPP. Residues 170 to 358 form the CheB-type methylesterase domain; the sequence is PVPETMPVVC…LDRLAARIME (189 aa). Residues Ser183, His209, and Asp305 contribute to the active site.

The protein belongs to the CheB family. In terms of processing, phosphorylated in vitro by CheA2, but not by CheA1. Phosphorylation of the N-terminal regulatory domain activates the methylesterase activity.

It is found in the cytoplasm. The enzyme catalyses [protein]-L-glutamate 5-O-methyl ester + H2O = L-glutamyl-[protein] + methanol + H(+). The catalysed reaction is L-glutaminyl-[protein] + H2O = L-glutamyl-[protein] + NH4(+). In terms of biological role, involved in chemotaxis. Part of a chemotaxis signal transduction system that modulates chemotaxis in response to various stimuli. Catalyzes the demethylation of specific methylglutamate residues introduced into the chemoreceptors (methyl-accepting chemotaxis proteins or MCP) by CheR. Also mediates the irreversible deamidation of specific glutamine residues to glutamic acid. In Cereibacter sphaeroides (Rhodobacter sphaeroides), this protein is Protein-glutamate methylesterase/protein-glutamine glutaminase of group 3 operon (cheB3).